The chain runs to 1722 residues: Signal-induced proliferation-associated 1-like protein 2 (1722 aa).

2 disordered regions span residues 1 to 29 (MSDPRPSQAEKHKLGRAAAKLKDPSRTMQ) and 44 to 72 (SMGPATLNTSSSSEGGGGGGGPANGTPAV). Residues 57 to 66 (EGGGGGGGPA) are compositionally biased toward gly residues. Phosphoserine occurs at positions 149, 380, and 384. The tract at residues 362 to 405 (ASAASQTPVPVGPAGGCESPLGSKEDLNSKENPDADEGDGKSND) is disordered. Positions 384–403 (SKEDLNSKENPDADEGDGKS) are enriched in basic and acidic residues. A Rap-GAP domain is found at 596–813 (LLKLDEQGLS…RTRQEYLKDL (218 aa)). Positions 951 to 1027 (EMTLRRNGLG…VKVVIIQPHE (77 aa)) constitute a PDZ domain. Ser-1030 carries the post-translational modification Phosphoserine. Disordered stretches follow at residues 1068–1246 (HRVP…FGSG) and 1331–1360 (GSMGDLSEVSSHSSGSQHSGSPSAHCSKST). 2 stretches are compositionally biased toward low complexity: residues 1091 to 1103 (LQCQPLLQQAQAA) and 1120 to 1131 (SSPSNQSSSSDP). Basic and acidic residues predominate over residues 1195 to 1218 (YKERVLQKDGSCKESPNKLSHIGD). Residues 1220–1237 (SCSSHSSSNTLSSNTSSN) show a composition bias toward low complexity. Ser-1245 carries the post-translational modification Phosphoserine. Residues 1331–1355 (GSMGDLSEVSSHSSGSQHSGSPSAH) are compositionally biased toward low complexity. Phosphoserine occurs at positions 1461, 1472, 1478, 1488, 1549, 1552, and 1591. The stretch at 1652–1712 (STLTGKVNQL…ATAQLRKFTE (61 aa)) forms a coiled coil.

The protein is Signal-induced proliferation-associated 1-like protein 2 (Sipa1l2) of Mus musculus (Mouse).